The sequence spans 436 residues: MQPVVETLSGLERRVDLAVSVAEVEKEVQAQLKRVGRTAKVAGFRPGKAPLAMLERSHGPGIRYDVINSLVGRAFEQAVDGAKLRVAGSPTLTPKTEGVADDTLAFTATFEVYPEVTVPDLSALAVTRYDTPVTDAEVNQTLDVLRKQRAKFETREGRASQDGDRVVLDFAGTIDGVPFEGGKAEDFPFVLGQGRMLPEFEEAALGLKAGESKVFPLKFPDDYQGKEVAGKTAEFTITVKEVAEGVLPEVDAEFAKSLGQAEGDVEKLKADIRTNIEREVKARLQGRTKGSVMDALVEAGKFDVPKALVDSDVEGRIAAAREELKQRGVPNADSVPMPAEVFSTESERRVRLGLLVSELVKQAQLQAKPEQVRARIEEFAQNYEQPAQVVSYYLADRQRRAEIEAIVLEDNVVAHVLENAKVADEKVPFDQLMGMA.

The PPIase FKBP-type domain occupies 163–248 (GDRVVLDFAG…VKEVAEGVLP (86 aa)).

Belongs to the FKBP-type PPIase family. Tig subfamily.

The protein resides in the cytoplasm. The enzyme catalyses [protein]-peptidylproline (omega=180) = [protein]-peptidylproline (omega=0). Involved in protein export. Acts as a chaperone by maintaining the newly synthesized protein in an open conformation. Functions as a peptidyl-prolyl cis-trans isomerase. This chain is Trigger factor, found in Bordetella bronchiseptica (strain ATCC BAA-588 / NCTC 13252 / RB50) (Alcaligenes bronchisepticus).